The chain runs to 526 residues: Chaperonin GroEL 2 (526 aa).

ATP contacts are provided by Lys50, Gly413, and Asp494.

Belongs to the chaperonin (HSP60) family. In terms of assembly, forms a cylinder of 14 subunits composed of two heptameric rings stacked back-to-back. Interacts with the co-chaperonin GroES.

It localises to the cytoplasm. It catalyses the reaction ATP + H2O + a folded polypeptide = ADP + phosphate + an unfolded polypeptide.. In terms of biological role, together with its co-chaperonin GroES, plays an essential role in assisting protein folding. The GroEL-GroES system forms a nano-cage that allows encapsulation of the non-native substrate proteins and provides a physical environment optimized to promote and accelerate protein folding. This Chlamydia pneumoniae (Chlamydophila pneumoniae) protein is Chaperonin GroEL 2.